The chain runs to 700 residues: Serine/threonine-protein kinase WNK1 (700 aa).

Residues 24–281 form the Protein kinase domain; it reads GRYNEVLGKG…ARELLDDPFL (258 aa). Residues 104–107 and Lys154 contribute to the ATP site; that span reads TELF. The active-site Proton acceptor is the Asp171. The segment covering 314–339 has biased composition (low complexity); sequence NYPSNSSSLNRQYSNGNYPSNSSSLN. Disordered regions lie at residues 314 to 345, 551 to 575, and 647 to 666; these read NYPS…YSNG, ESRE…EVLY, and ESGE…SVSG. A compositionally biased stretch (basic and acidic residues) spans 551 to 565; it reads ESRELSSIDSGHNHS. Residues 566 to 575 are compositionally biased toward acidic residues; it reads EEEEEEEVLY.

Belongs to the protein kinase superfamily. Ser/Thr protein kinase family. WNK subfamily. Post-translationally, autophosphorylated.

The catalysed reaction is L-seryl-[protein] + ATP = O-phospho-L-seryl-[protein] + ADP + H(+). It catalyses the reaction L-threonyl-[protein] + ATP = O-phospho-L-threonyl-[protein] + ADP + H(+). Functionally, regulates flowering time by modulating the photoperiod pathway. Phosphorylates APRR3. The polypeptide is Serine/threonine-protein kinase WNK1 (WNK1) (Arabidopsis thaliana (Mouse-ear cress)).